The sequence spans 275 residues: NH(3)-dependent NAD(+) synthetase (275 aa).

46–53 (GISGGQDS) serves as a coordination point for ATP. Position 52 (D52) interacts with Mg(2+). R140 provides a ligand contact to deamido-NAD(+). T160 is a binding site for ATP. E165 contributes to the Mg(2+) binding site. Deamido-NAD(+) contacts are provided by K173 and D180. ATP-binding residues include K189 and T211. 260-261 (HK) is a binding site for deamido-NAD(+).

This sequence belongs to the NAD synthetase family. As to quaternary structure, homodimer.

It carries out the reaction deamido-NAD(+) + NH4(+) + ATP = AMP + diphosphate + NAD(+) + H(+). It participates in cofactor biosynthesis; NAD(+) biosynthesis; NAD(+) from deamido-NAD(+) (ammonia route): step 1/1. Its function is as follows. Catalyzes the ATP-dependent amidation of deamido-NAD to form NAD. Uses ammonia as a nitrogen source. The sequence is that of NH(3)-dependent NAD(+) synthetase from Escherichia coli O139:H28 (strain E24377A / ETEC).